A 299-amino-acid chain; its full sequence is Coenzyme PQQ synthesis protein B (299 aa).

Belongs to the PqqB family.

It participates in cofactor biosynthesis; pyrroloquinoline quinone biosynthesis. In terms of biological role, may be involved in the transport of PQQ or its precursor to the periplasm. The sequence is that of Coenzyme PQQ synthesis protein B from Methylobacterium nodulans (strain LMG 21967 / CNCM I-2342 / ORS 2060).